The sequence spans 87 residues: Mitochondrial import inner membrane translocase subunit TIM9 (87 aa).

Methionine 1 bears the N-acetylmethionine mark. Positions cysteine 35–cysteine 59 match the Twin CX3C motif motif. Disulfide bonds link cysteine 35–cysteine 59 and cysteine 39–cysteine 55.

This sequence belongs to the small Tim family. As to quaternary structure, heterohexamer; composed of 3 copies of TIM9 and 3 copies of TIM10, named soluble 70 kDa complex. Associates with the TIM12 component of the TIM22 complex, whose core is composed of TIM18, TIM22 and TIM54. Interacts with the transmembrane regions of multi-pass transmembrane proteins in transit.

Its subcellular location is the mitochondrion inner membrane. The protein resides in the mitochondrion intermembrane space. Functionally, mitochondrial intermembrane chaperone that participates in the import and insertion of multi-pass transmembrane proteins into the mitochondrial inner membrane. Also required for the transfer of beta-barrel precursors from the TOM complex to the sorting and assembly machinery (SAM complex) of the outer membrane. Acts as a chaperone-like protein that protects the hydrophobic precursors from aggregation and guide them through the mitochondrial intermembrane space. Compared to TIM10, it may have a strong structural role. The polypeptide is Mitochondrial import inner membrane translocase subunit TIM9 (TIM9) (Saccharomyces cerevisiae (strain ATCC 204508 / S288c) (Baker's yeast)).